The chain runs to 449 residues: Gamma-aminobutyric acid receptor subunit delta (449 aa).

The N-terminal stretch at M1–A24 is a signal peptide. At M25–I251 the chain is on the extracellular side. Residues N103 and N106 are each glycosylated (N-linked (GlcNAc...) asparagine). C164 and C178 are disulfide-bonded. Residues I252–I271 traverse the membrane as a helical segment. Residues S272–A275 lie on the Cytoplasmic side of the membrane. A helical transmembrane segment spans residues V276–R298. Topologically, residues S299–K308 are extracellular. Residues A309 to A331 traverse the membrane as a helical segment. Over H332–T423 the chain is Cytoplasmic. S390 is subject to Phosphoserine. Residues I424–A446 form a helical membrane-spanning segment. Residues Y447 to M449 are Extracellular-facing.

The protein belongs to the ligand-gated ion channel (TC 1.A.9) family. Gamma-aminobutyric acid receptor (TC 1.A.9.5) subfamily. GABRD sub-subfamily. Heteropentamer, formed by a combination of alpha (GABRA1-6), beta (GABRB1-3), gamma (GABRG1-3), delta (GABRD), epsilon (GABRE), rho (GABRR1-3), pi (GABRP) and theta (GABRQ) chains, each subunit exhibiting distinct physiological and pharmacological properties.

The protein resides in the cell membrane. The catalysed reaction is chloride(in) = chloride(out). Its function is as follows. Delta subunit of the heteropentameric ligand-gated chloride channel gated by gamma-aminobutyric acid (GABA), a major inhibitory neurotransmitter in the brain. GABA-gated chloride channels, also named GABA(A) receptors (GABAAR), consist of five subunits arranged around a central pore and contain GABA active binding site(s) located at the alpha and beta subunit interface(s). When activated by GABA, GABAARs selectively allow the flow of chloride anions across the cell membrane down their electrochemical gradient. GABAARs containing delta/GABRD subunits are predominantly expressed and located in extrasynaptic or perisynaptic positions on hippocampus and cerebellar granule cells, and contribute to the tonic GABAergic inhibition. GABAAR containing alpha-4-beta-3-delta subunits can simultaneously bind GABA and histamine where histamine binds at the interface of two neighboring beta subunits, which may be involved in the regulation of sleep and wakefulness. This chain is Gamma-aminobutyric acid receptor subunit delta, found in Mus musculus (Mouse).